Here is a 120-residue protein sequence, read N- to C-terminus: NAD(P)H-quinone oxidoreductase subunit 3, chloroplastic (120 aa).

3 consecutive transmembrane segments (helical) span residues 9–29 (YFWLFLLLASLIPPVASPISS), 64–84 (MFASVFVISDAETVSLYPWAM), and 89–109 (LGVPASAEASISVTIPIVGSV).

It belongs to the complex I subunit 3 family. NDH is composed of at least 16 different subunits, 5 of which are encoded in the nucleus.

It is found in the plastid. It localises to the chloroplast thylakoid membrane. It catalyses the reaction a plastoquinone + NADH + (n+1) H(+)(in) = a plastoquinol + NAD(+) + n H(+)(out). The catalysed reaction is a plastoquinone + NADPH + (n+1) H(+)(in) = a plastoquinol + NADP(+) + n H(+)(out). In terms of biological role, NDH shuttles electrons from NAD(P)H:plastoquinone, via FMN and iron-sulfur (Fe-S) centers, to quinones in the photosynthetic chain and possibly in a chloroplast respiratory chain. The immediate electron acceptor for the enzyme in this species is believed to be plastoquinone. Couples the redox reaction to proton translocation, and thus conserves the redox energy in a proton gradient. The sequence is that of NAD(P)H-quinone oxidoreductase subunit 3, chloroplastic from Huperzia lucidula (Shining clubmoss).